The sequence spans 319 residues: Ferrochelatase (319 aa).

Fe cation contacts are provided by His194 and Glu275.

It belongs to the ferrochelatase family.

It localises to the cytoplasm. The catalysed reaction is heme b + 2 H(+) = protoporphyrin IX + Fe(2+). Its pathway is porphyrin-containing compound metabolism; protoheme biosynthesis; protoheme from protoporphyrin-IX: step 1/1. Catalyzes the ferrous insertion into protoporphyrin IX. The chain is Ferrochelatase from Vibrio vulnificus (strain CMCP6).